We begin with the raw amino-acid sequence, 121 residues long: Autophagy-related protein 8 (121 aa).

Gly-116 carries Phosphatidylethanolamine amidated glycine lipidation. The propeptide at 117–121 (DFETA) is removed in mature form.

It belongs to the ATG8 family. Post-translationally, the C-terminal 5 residues are removed to expose Gly-116 at the C-terminus. The C-terminal Gly is then amidated with phosphatidylethanolamine by an activating system similar to that for ubiquitin.

Its subcellular location is the cytoplasmic vesicle. It localises to the autophagosome membrane. It is found in the vacuole membrane. Ubiquitin-like modifier involved in autophagosome formation. With cpr-1/atg4, mediates the delivery of the autophagosomes to the vacuole via the microtubule cytoskeleton. Required for selective autophagic degradation of the nucleus (nucleophagy) as well as for mitophagy which contributes to regulate mitochondrial quantity and quality by eliminating the mitochondria to a basal level to fulfill cellular energy requirements and preventing excess ROS production. Also participates in membrane fusion events that take place in the early secretory pathway. Also involved in endoplasmic reticulum-specific autophagic process and is essential for the survival of cells subjected to severe ER stress. The apg-6/atg8-PE conjugate mediates tethering between adjacent membranes and stimulates membrane hemifusion, leading to expansion of the autophagosomal membrane during autophagy. The polypeptide is Autophagy-related protein 8 (apg-6) (Neurospora crassa (strain ATCC 24698 / 74-OR23-1A / CBS 708.71 / DSM 1257 / FGSC 987)).